Here is a 740-residue protein sequence, read N- to C-terminus: ATP-dependent RNA helicase DDX1 (740 aa).

An interaction with dsRNA region spans residues 1–448 (MAAFSEMGVM…ETVHHVVVIV (448 aa)). Residues 2 to 428 (AAFSEMGVMP…SEKIMHFPTW (427 aa)) form the Helicase ATP-binding domain. Residue 46–53 (AETGSGKT) participates in ATP binding. The B30.2/SPRY domain maps to 70-247 (DQMEGKKGKA…LKFNFGEEDF (178 aa)). The DEAD box motif lies at 370–373 (DEAD). In terms of domain architecture, Helicase C-terminal spans 493-681 (KGEYTVRAIK…QVEPDIKVPV (189 aa)).

It belongs to the DEAD box helicase family. DDX1 subfamily. In terms of tissue distribution, detected in embryonic retina, brain, heart and liver (at protein level). Detected in embryonic retina, brain, heart, kidney and liver.

It localises to the nucleus. The protein resides in the cytoplasm. Its subcellular location is the cytoplasmic granule. The protein localises to the cytosol. It is found in the mitochondrion. The catalysed reaction is ATP + H2O = ADP + phosphate + H(+). Functionally, acts as an ATP-dependent RNA helicase, able to unwind both RNA-RNA and RNA-DNA duplexes. Possesses 5' single-stranded RNA overhang nuclease activity. Acts as a positive regulator of transcription. May be involved in 3'-end cleavage and polyadenylation of pre-mRNAs. Binds DNA and RNA. Component of the tRNA-splicing ligase complex required to facilitate the enzymatic turnover of catalytic subunit RTCB. Binds (via helicase ATP-binding domain) on both short and long poly(I:C) dsRNA. This Gallus gallus (Chicken) protein is ATP-dependent RNA helicase DDX1 (DDX1).